The primary structure comprises 178 residues: uncharacterized protein (178 aa).

This is an uncharacterized protein from Saccharolobus islandicus (Sulfolobus islandicus).